Consider the following 165-residue polypeptide: MMRCCRRRCCCRQPPHALRPLLLLPLVLLPPLAAAAAGPNRCDTIYQGFAECLIRLGDSMGRGGELETICRSWNDFHACASQVLSGCPEEAAAVWESLQQEARQAPRPNNLHTLCGAPVHVRERGTGSETNQETLRATAPALPMAPAPPLLAAALALAYLLRPLA.

A signal peptide spans Met1–Ala35. Ala139 is lipidated: GPI-anchor amidated alanine. Residues Pro140–Ala165 constitute a propeptide, removed in mature form.

This sequence belongs to the neuritin family.

Its subcellular location is the cell membrane. In Homo sapiens (Human), this protein is Neuritin-like protein (NRN1L).